The following is a 796-amino-acid chain: ER degradation-enhancing alpha-mannosidase-like protein 1 (796 aa).

Residues 1–20 (MVCCLWVLLALLLHLDHVAC) form the signal peptide. A glycan (N-linked (GlcNAc...) asparagine) is linked at Asn-86. Glu-372 serves as the catalytic Proton donor. Thr-495 provides a ligand contact to Ca(2+). Asn-517, Asn-672, and Asn-762 each carry an N-linked (GlcNAc...) asparagine glycan.

It belongs to the glycosyl hydrolase 47 family. In terms of assembly, interacts with PDI1. The cofactor is Ca(2+).

It localises to the endoplasmic reticulum lumen. It catalyses the reaction Hydrolysis of terminal, non-reducing alpha-D-mannose residues in alpha-D-mannosides.. It participates in protein modification; protein glycosylation. Functionally, alpha-1,2-specific exomannosidase involved in endoplasmic reticulum-associated degradation (ERAD). Delivers misfolded glycoproteins to proteasomes. Forms a complex with PDI1 to process unfolded protein-bound Man8GlcNAc2 oligosaccharides to Man7GlcNAc2, promoting degradation in unfolded protein response. The sequence is that of ER degradation-enhancing alpha-mannosidase-like protein 1 (MNL1) from Saccharomyces cerevisiae (strain ATCC 204508 / S288c) (Baker's yeast).